The primary structure comprises 315 residues: Ribosomal RNA small subunit methyltransferase H (315 aa).

S-adenosyl-L-methionine contacts are provided by residues 61-63, D80, F108, D124, and Q131; that span reads GGH. The segment at 291 to 315 is disordered; that stretch reads PQPEEEEKNPRSRSAKLRFAQRKPL. Positions 301–315 are enriched in basic residues; the sequence is RSRSAKLRFAQRKPL.

It belongs to the methyltransferase superfamily. RsmH family.

The protein localises to the cytoplasm. The catalysed reaction is cytidine(1402) in 16S rRNA + S-adenosyl-L-methionine = N(4)-methylcytidine(1402) in 16S rRNA + S-adenosyl-L-homocysteine + H(+). Functionally, specifically methylates the N4 position of cytidine in position 1402 (C1402) of 16S rRNA. The chain is Ribosomal RNA small subunit methyltransferase H from Crocosphaera subtropica (strain ATCC 51142 / BH68) (Cyanothece sp. (strain ATCC 51142)).